Reading from the N-terminus, the 423-residue chain is Aspartic protease-like protein pytH (423 aa).

The signal sequence occupies residues 1–16; it reads MWLSVALLTLLDGALA. In terms of domain architecture, Peptidase A1 spans 38–416; the sequence is TTDAIQIGTP…DFDKLRVGLA (379 aa). The active site involves Asp-56. Residues Asn-88, Asn-97, Asn-168, Asn-196, Asn-231, and Asn-279 are each glycosylated (N-linked (GlcNAc...) asparagine). The active site involves Asp-291. A glycan (N-linked (GlcNAc...) asparagine) is linked at Asn-330. Cys-338 and Cys-377 form a disulfide bridge.

This sequence belongs to the peptidase A1 family.

It participates in secondary metabolite biosynthesis. Functionally, aspartic protease-like protein; part of the gene cluster that mediates the biosynthesis of pyranterreones, a family of antioxidative compounds. The first step of pyranonigrins biosynthesis is performed by the hybrid PKS-NRPS synthetase pytA that condenses 4 malonyl-CoA units ato the acetyl starter unit by the modular PKS of pytA. The acyl chain is then connected to an L-serine through the amide bond by the modular NRPS of pytA. A tetramic acid is formed and released from the PKS-NRPS pytA to give pyranterreone 5 with the help of the thioesterase pytI. Pyranterreone 5 could be methylated by pytC to afford pyranterreone 6. Both pyranterreones 5 and 6 are subsequently oxidized by the FAD-linked oxidoreductase pytB and the cytochrome P450 monooxygenase pytD to form the fused gamma-pyrone core, resulting in pyranterreones 7 and 11, respectively. The hydroxy group at C-8 of pyranterreones 7 and 11 are dehydrated by the aspartyl protease pytH to form a delta-7 double bond to give pyranterreones 3 and 1, 2 accordingly. The exo-methylene of pyranterreone 3 could be reduced into a pendant methyl by reductase pytE to provide pyranterreone 4, also known as cordylactam. Pyranterreone 4 can be reconverted to pyranterreone 3 through pytB-catalyzed dehydrogenation or further oxidized to pyranterreones 9 and 10. The protein is Aspartic protease-like protein pytH of Aspergillus terreus (strain NIH 2624 / FGSC A1156).